A 513-amino-acid polypeptide reads, in one-letter code: ETS translocation variant 3 (513 aa).

Residues 35–116 (IQLWHFILEL…KGKRFTYKFN (82 aa)) constitute a DNA-binding region (ETS). The disordered stretch occupies residues 138–202 (QSAPPVPTAS…DLEDGSASDW (65 aa)). Ser139, Ser159, and Ser315 each carry phosphoserine. Residues 333–513 (QMHPEEPSQF…ATTATAAADA (181 aa)) are disordered. Composition is skewed to basic and acidic residues over residues 357–366 (ERVESREEAV), 380–392 (IKVE…DPDS), and 399–419 (GKEE…EEGK). Residue Lys381 forms a Glycyl lysine isopeptide (Lys-Gly) (interchain with G-Cter in SUMO2) linkage. The residue at position 388 (Lys388) is an N6-acetyllysine; alternate. Lys388 participates in a covalent cross-link: Glycyl lysine isopeptide (Lys-Gly) (interchain with G-Cter in SUMO2); alternate. Polar residues predominate over residues 430–439 (WPSVSISTPS). Residues 441-450 (EPLEGTEDSE) show a composition bias toward acidic residues. 2 stretches are compositionally biased toward basic and acidic residues: residues 451–466 (DRSV…KEDA) and 477–489 (RWND…ELNK). Residues 504–513 (ATTATAAADA) are compositionally biased toward low complexity.

Belongs to the ETS family.

The protein localises to the nucleus. Its function is as follows. Transcriptional repressor that contribute to growth arrest during terminal macrophage differentiation by repressing target genes involved in Ras-dependent proliferation. Represses MMP1 promoter activity. The polypeptide is ETS translocation variant 3 (Etv3) (Mus musculus (Mouse)).